The chain runs to 286 residues: L-cysteine S-thiosulfotransferase subunit SoxA (286 aa).

The signal sequence occupies residues 1 to 27; the sequence is MKKTIQRGLFTGALVLMTAMTAKPANA. Residues Cys-106 and Cys-137 are joined by a disulfide bond. The 107-residue stretch at 180–286 folds into the Cytochrome c domain; that stretch reads DAYMKGKKFF…LKYNGPASRK (107 aa). 2 residues coordinate heme: Cys-200 and His-204. Position 243 (Arg-243) interacts with substrate. Position 247 (Cys-247) interacts with heme. The active-site Cysteine persulfide intermediate is the Cys-247.

The protein belongs to the SoxA family. As to quaternary structure, heterodimer of SoxA and SoxX. The SoxAX complex interacts with CT1020, SoxAX-binding protein SaxB (SoxK); this interaction seems to be between SoxA and CT1020 and stimulates catalytic activity of the SoxAX complex. Requires heme as cofactor. Cysteine persulfide at Cys-247.

Its subcellular location is the periplasm. The catalysed reaction is L-cysteinyl-[SoxY protein] + thiosulfate + 2 Fe(III)-[cytochrome c] = S-sulfosulfanyl-L-cysteinyl-[SoxY protein] + 2 Fe(II)-[cytochrome c] + 2 H(+). The enzyme catalyses S-sulfanyl-L-cysteinyl-[SoxY protein] + thiosulfate + 2 Fe(III)-[cytochrome c] = S-(2-sulfodisulfanyl)-L-cysteinyl-[SoxY protein] + 2 Fe(II)-[cytochrome c] + 2 H(+). C-type monoheme cytochrome, which is part of the SoxAX cytochrome complex involved in sulfur oxidation. The SoxAX complex catalyzes the formation of a heterodisulfide bond between the conserved cysteine residue on a sulfur carrier SoxYZ complex subunit SoxY and thiosulfate or other inorganic sulfur substrates. This leads to the liberation of two electrons, which may be transferred from the SoxAX complex to another cytochrome c and which then may be used for reductive CO(2) fixation. In Chlorobaculum tepidum (strain ATCC 49652 / DSM 12025 / NBRC 103806 / TLS) (Chlorobium tepidum), this protein is L-cysteine S-thiosulfotransferase subunit SoxA.